The following is a 248-amino-acid chain: Homeotic protein ultrabithorax (248 aa).

Residues 116 to 125 (GTGGGGGGSA) show a composition bias toward gly residues. Residues 116–191 (GTGGGGGGSA…GSAGVVGGAG (76 aa)) form a disordered region. Positions 126 to 139 (GSANGANNTANGQN) are enriched in low complexity. Composition is skewed to gly residues over residues 140–152 (TSGGGGAGGGGGM) and 182–191 (GSAGVVGGAG). Positions 241–246 (FYPWMA) match the Antp-type hexapeptide motif.

Belongs to the Antp homeobox family.

Its subcellular location is the nucleus. In terms of biological role, sequence-specific transcription factor which is part of a developmental regulatory system that provides cells with specific positional identities on the anterior-posterior axis. Binds the consensus region 5'-TTAAT[GT][GA]-3'. In Musca domestica (House fly), this protein is Homeotic protein ultrabithorax (Ubx).